Consider the following 118-residue polypeptide: UPF0125 protein RSc1426 (118 aa).

The protein belongs to the UPF0125 (RnfH) family.

In Ralstonia nicotianae (strain ATCC BAA-1114 / GMI1000) (Ralstonia solanacearum), this protein is UPF0125 protein RSc1426.